The chain runs to 145 residues: Putative esterase PA1618 (145 aa).

It belongs to the thioesterase PaaI family.

The sequence is that of Putative esterase PA1618 from Pseudomonas aeruginosa (strain ATCC 15692 / DSM 22644 / CIP 104116 / JCM 14847 / LMG 12228 / 1C / PRS 101 / PAO1).